The following is a 345-amino-acid chain: Phosphoribosylformylglycinamidine cyclo-ligase (345 aa).

It belongs to the AIR synthase family.

The protein resides in the cytoplasm. It catalyses the reaction 2-formamido-N(1)-(5-O-phospho-beta-D-ribosyl)acetamidine + ATP = 5-amino-1-(5-phospho-beta-D-ribosyl)imidazole + ADP + phosphate + H(+). It functions in the pathway purine metabolism; IMP biosynthesis via de novo pathway; 5-amino-1-(5-phospho-D-ribosyl)imidazole from N(2)-formyl-N(1)-(5-phospho-D-ribosyl)glycinamide: step 2/2. The protein is Phosphoribosylformylglycinamidine cyclo-ligase of Methylococcus capsulatus (strain ATCC 33009 / NCIMB 11132 / Bath).